The following is a 258-amino-acid chain: Tryptophan synthase alpha chain (258 aa).

Residues glutamate 47 and aspartate 58 each act as proton acceptor in the active site.

This sequence belongs to the TrpA family. In terms of assembly, tetramer of two alpha and two beta chains.

The enzyme catalyses (1S,2R)-1-C-(indol-3-yl)glycerol 3-phosphate + L-serine = D-glyceraldehyde 3-phosphate + L-tryptophan + H2O. The protein operates within amino-acid biosynthesis; L-tryptophan biosynthesis; L-tryptophan from chorismate: step 5/5. The alpha subunit is responsible for the aldol cleavage of indoleglycerol phosphate to indole and glyceraldehyde 3-phosphate. In Bacillus anthracis (strain CDC 684 / NRRL 3495), this protein is Tryptophan synthase alpha chain.